A 142-amino-acid polypeptide reads, in one-letter code: Large ribosomal subunit protein uL11 (142 aa).

This sequence belongs to the universal ribosomal protein uL11 family. Part of the ribosomal stalk of the 50S ribosomal subunit. Interacts with L10 and the large rRNA to form the base of the stalk. L10 forms an elongated spine to which L12 dimers bind in a sequential fashion forming a multimeric L10(L12)X complex. In terms of processing, one or more lysine residues are methylated.

Its function is as follows. Forms part of the ribosomal stalk which helps the ribosome interact with GTP-bound translation factors. The protein is Large ribosomal subunit protein uL11 of Actinobacillus succinogenes (strain ATCC 55618 / DSM 22257 / CCUG 43843 / 130Z).